The following is a 330-amino-acid chain: Beta-ketoacyl-[acyl-carrier-protein] synthase III (330 aa).

Catalysis depends on residues Cys-116 and His-257. Residues 258-262 (QANQR) form an ACP-binding region. The active site involves Asn-287.

It belongs to the thiolase-like superfamily. FabH family. As to quaternary structure, homodimer.

Its subcellular location is the cytoplasm. It catalyses the reaction malonyl-[ACP] + acetyl-CoA + H(+) = 3-oxobutanoyl-[ACP] + CO2 + CoA. It functions in the pathway lipid metabolism; fatty acid biosynthesis. Catalyzes the condensation reaction of fatty acid synthesis by the addition to an acyl acceptor of two carbons from malonyl-ACP. Catalyzes the first condensation reaction which initiates fatty acid synthesis and may therefore play a role in governing the total rate of fatty acid production. Possesses both acetoacetyl-ACP synthase and acetyl transacylase activities. Its substrate specificity determines the biosynthesis of branched-chain and/or straight-chain of fatty acids. The polypeptide is Beta-ketoacyl-[acyl-carrier-protein] synthase III (Synechocystis sp. (strain ATCC 27184 / PCC 6803 / Kazusa)).